The sequence spans 390 residues: Homoserine O-succinyltransferase (390 aa).

Residues 56 to 365 (NAVLICHALS…SPHGHDAFLL (310 aa)) form the AB hydrolase-1 domain. S162 acts as the Nucleophile in catalysis. R232 lines the substrate pocket. Active-site residues include D327 and H360. A substrate-binding site is contributed by D361.

Belongs to the AB hydrolase superfamily. MetX family. As to quaternary structure, homodimer.

The protein localises to the cytoplasm. It catalyses the reaction L-homoserine + succinyl-CoA = O-succinyl-L-homoserine + CoA. Its pathway is amino-acid biosynthesis; L-methionine biosynthesis via de novo pathway; O-succinyl-L-homoserine from L-homoserine: step 1/1. In terms of biological role, transfers a succinyl group from succinyl-CoA to L-homoserine, forming succinyl-L-homoserine. In vitro, also has serine succinyl transferase activity. The polypeptide is Homoserine O-succinyltransferase (Litchfieldella anticariensis (strain DSM 16096 / CECT 5854 / CIP 108499 / LMG 22089 / FP35) (Halomonas anticariensis)).